The sequence spans 316 residues: L-lactate dehydrogenase (316 aa).

NAD(+)-binding positions include Met14, 14-150, Ile15, Asp35, Tyr67, Gly81, Phe82, Val125, Asn127, and Leu150; that span reads MIGG…IIGL. Arg95 is a substrate binding site. Substrate is bound by residues Arg158 and His182. Catalysis depends on His182, which acts as the Proton acceptor.

It belongs to the LDH/MDH superfamily. LDH family. In terms of assembly, homotetramer.

The enzyme catalyses (S)-lactate + NAD(+) = pyruvate + NADH + H(+). It participates in fermentation; pyruvate fermentation to lactate; (S)-lactate from pyruvate: step 1/1. The protein is L-lactate dehydrogenase of Plasmodium falciparum (isolate CDC / Honduras).